The following is a 231-amino-acid chain: tRNA1(Val) (adenine(37)-N6)-methyltransferase (231 aa).

This sequence belongs to the methyltransferase superfamily. tRNA (adenine-N(6)-)-methyltransferase family.

It is found in the cytoplasm. It carries out the reaction adenosine(37) in tRNA1(Val) + S-adenosyl-L-methionine = N(6)-methyladenosine(37) in tRNA1(Val) + S-adenosyl-L-homocysteine + H(+). In terms of biological role, specifically methylates the adenine in position 37 of tRNA(1)(Val) (anticodon cmo5UAC). The protein is tRNA1(Val) (adenine(37)-N6)-methyltransferase of Flavobacteriaceae bacterium (strain 3519-10).